A 387-amino-acid chain; its full sequence is Phosphoglycerate kinase (387 aa).

Residues 21–23 (DLN), Arg-36, 59–62 (HLGR), Arg-113, and Arg-146 each bind substrate. ATP is bound by residues Lys-197, Glu-314, and 340-343 (GGDT).

The protein belongs to the phosphoglycerate kinase family. As to quaternary structure, monomer.

The protein resides in the cytoplasm. The enzyme catalyses (2R)-3-phosphoglycerate + ATP = (2R)-3-phospho-glyceroyl phosphate + ADP. It functions in the pathway carbohydrate degradation; glycolysis; pyruvate from D-glyceraldehyde 3-phosphate: step 2/5. The protein is Phosphoglycerate kinase of Aeromonas salmonicida (strain A449).